A 131-amino-acid chain; its full sequence is MCSARKLLRGGAGSAGGECDEDGAAPAGRVEEPEHGASPRRRRPQDEGEQDIEEPQNHSGEPIGDDYKKMGTLFGELNKNLLNMGFTRMYFGERIVEPVVVLFFWLMLWFLGLQALGLVAVLCLVIIYVQQ.

Residues 1 to 67 are disordered; it reads MCSARKLLRG…HSGEPIGDDY (67 aa). Position 14 is a phosphoserine (serine 14). A helical membrane pass occupies residues 99–119; sequence VVVLFFWLMLWFLGLQALGLV.

Belongs to the FAM241 family.

Its subcellular location is the membrane. This is an uncharacterized protein from Mus musculus (Mouse).